The chain runs to 227 residues: Cytidylate kinase (227 aa).

10 to 18 (GPASSGKST) lines the ATP pocket.

It belongs to the cytidylate kinase family. Type 1 subfamily.

It localises to the cytoplasm. It catalyses the reaction CMP + ATP = CDP + ADP. The enzyme catalyses dCMP + ATP = dCDP + ADP. This chain is Cytidylate kinase, found in Streptococcus agalactiae serotype V (strain ATCC BAA-611 / 2603 V/R).